The following is a 281-amino-acid chain: Polyamine aminopropyltransferase (281 aa).

In terms of domain architecture, PABS spans 2-237 (EIWYTEKLEL…GIIGFTFLSN (236 aa)). Glutamine 33 serves as a coordination point for S-methyl-5'-thioadenosine. Positions 64 and 88 each coordinate spermidine. S-methyl-5'-thioadenosine is bound by residues glutamate 108 and 139–140 (DG). Aspartate 157 acts as the Proton acceptor in catalysis. Residue 157 to 160 (DSSD) coordinates spermidine. Proline 164 lines the S-methyl-5'-thioadenosine pocket.

It belongs to the spermidine/spermine synthase family. Homodimer or homotetramer.

The protein localises to the cytoplasm. It catalyses the reaction S-adenosyl 3-(methylsulfanyl)propylamine + putrescine = S-methyl-5'-thioadenosine + spermidine + H(+). It participates in amine and polyamine biosynthesis; spermidine biosynthesis; spermidine from putrescine: step 1/1. Functionally, catalyzes the irreversible transfer of a propylamine group from the amino donor S-adenosylmethioninamine (decarboxy-AdoMet) to putrescine (1,4-diaminobutane) to yield spermidine. The chain is Polyamine aminopropyltransferase from Leptospira biflexa serovar Patoc (strain Patoc 1 / Ames).